A 296-amino-acid chain; its full sequence is Hca operon transcriptional activator HcaR (296 aa).

The HTH lysR-type domain maps to 1 to 58; sequence MELRHLRYFVAVAQALNFTRAAEKLHTSQPSLSSQIRDLENCVGVPLLVRDKRKVALT. Residues 18–38 constitute a DNA-binding region (H-T-H motif); that stretch reads FTRAAEKLHTSQPSLSSQIRD.

This sequence belongs to the LysR transcriptional regulatory family.

Functionally, transcriptional activator of the hca operon for 3-phenylpropionic acid catabolism. The protein is Hca operon transcriptional activator HcaR (hcaR) of Escherichia coli (strain K12).